Consider the following 515-residue polypeptide: Hopanoid C-3 methylase (515 aa).

A B12-binding domain is found at 8 to 141 (PSPLMYTKVF…ETLARRGNID (134 aa)). The Radical SAM core domain maps to 181-395 (GTLDPCASIE…DIQHAVLPTR (215 aa)). The [4Fe-4S] cluster site is built by cysteine 195, cysteine 199, and cysteine 202.

The protein belongs to the radical SAM superfamily. The cofactor is [4Fe-4S] cluster.

Required for methylation of hopanoids at the C-3 position. The polypeptide is Hopanoid C-3 methylase (Methylococcus capsulatus (strain ATCC 33009 / NCIMB 11132 / Bath)).